The following is a 261-amino-acid chain: Imidazole glycerol phosphate synthase subunit HisF (261 aa).

Catalysis depends on residues Asp16 and Asp135.

It belongs to the HisA/HisF family. Heterodimer of HisH and HisF.

The protein localises to the cytoplasm. It catalyses the reaction 5-[(5-phospho-1-deoxy-D-ribulos-1-ylimino)methylamino]-1-(5-phospho-beta-D-ribosyl)imidazole-4-carboxamide + L-glutamine = D-erythro-1-(imidazol-4-yl)glycerol 3-phosphate + 5-amino-1-(5-phospho-beta-D-ribosyl)imidazole-4-carboxamide + L-glutamate + H(+). The protein operates within amino-acid biosynthesis; L-histidine biosynthesis; L-histidine from 5-phospho-alpha-D-ribose 1-diphosphate: step 5/9. IGPS catalyzes the conversion of PRFAR and glutamine to IGP, AICAR and glutamate. The HisF subunit catalyzes the cyclization activity that produces IGP and AICAR from PRFAR using the ammonia provided by the HisH subunit. This Mycobacterium marinum (strain ATCC BAA-535 / M) protein is Imidazole glycerol phosphate synthase subunit HisF.